The primary structure comprises 172 residues: C-phycocyanin beta chain (172 aa).

Residues asparagine 35, aspartate 39, asparagine 72, arginine 77, cysteine 82, 82–88, 149–151, and cysteine 153 contribute to the (2R,3E)-phycocyanobilin site; these read CLRDMEI and TIG. Asparagine 72 carries the post-translational modification N4-methylasparagine.

It belongs to the phycobiliprotein family. In terms of assembly, heterodimer of an alpha and a beta subunit, which further assembles into trimers and the trimers into hexamers. The basic functional unit of phycobiliproteins is a ring-shaped hexamer formed from two back-to-back trimers contacting via the alpha chain subunits. The trimers are composed of alpha/beta subunit heterodimers arranged around a three-fold axis of symmetry. The phycoerythrins also contain a gamma subunit which is located in the center of the hexamer. In terms of processing, contains two covalently linked phycocyanobilin chromophores.

The protein localises to the plastid. The protein resides in the chloroplast thylakoid membrane. Its function is as follows. Light-harvesting photosynthetic tetrapyrrole chromophore-protein from the phycobiliprotein complex (phycobilisome, PBS). Phycocyanin is the major phycobiliprotein in the PBS rod. This chain is C-phycocyanin beta chain (cpcB), found in Cyanidium caldarium (Red alga).